We begin with the raw amino-acid sequence, 212 residues long: Vesicle transport protein SFT2C (212 aa).

The Cytoplasmic segment spans residues 1–78 (MADLHRQLQD…TRGQRLVAGG (78 aa)). A helical transmembrane segment spans residues 79-99 (LCLLLAALCFGLAALYAPVLL). At 100-104 (LRARK) the chain is on the lumenal side. A helical transmembrane segment spans residues 105–125 (FALLWSLGSVLAWASAALLRG). Over 126–142 (GPACGRLLRGEETPSRS) the chain is Cytoplasmic. A helical transmembrane segment spans residues 143 to 165 (TLGYAAALGATLYAALVLRSTVL). The Lumenal segment spans residues 166 to 174 (TALGACAQV). The chain crosses the membrane as a helical span at residues 175–197 (AALLYALIGLLPWGGVTALRLAL). Residues 198–212 (GRLNRGTGLANALPV) lie on the Cytoplasmic side of the membrane.

Belongs to the SFT2 family.

Its subcellular location is the membrane. Functionally, may be involved in fusion of retrograde transport vesicles derived from an endocytic compartment with the Golgi complex. The sequence is that of Vesicle transport protein SFT2C from Mus musculus (Mouse).